A 219-amino-acid polypeptide reads, in one-letter code: Dehydration-responsive element-binding protein 1F (219 aa).

The tract at residues 1-45 (MDTEDTSSASSSSVSPPSSPGGGHHHRLPPKRRAGRKKFRETRHP) is disordered. Low complexity predominate over residues 7-16 (SSASSSSVSP). The span at 23-41 (GHHHRLPPKRRAGRKKFRE) shows a compositional bias: basic residues. A DNA-binding region (AP2/ERF) is located at residues 46 to 105 (VYRGVRARAGGSRWVCEVREPQAQARIWLGTYPTPEMAARAHDVAAIALRGERGAELNFP). Residues 134–161 (RRPPPPLALPEDPQEGTSGGGATATSGR) form a disordered region.

It belongs to the AP2/ERF transcription factor family. ERF subfamily. Mostly expressed in developing seeds and apices.

It localises to the nucleus. Its function is as follows. Transcriptional activator that binds specifically to the DNA sequence 5'-[AG]CCGAC-3'. Binding to the C-repeat/DRE element mediates high salinity- and dehydration-inducible transcription. The polypeptide is Dehydration-responsive element-binding protein 1F (DREB1F) (Oryza sativa subsp. indica (Rice)).